Consider the following 445-residue polypeptide: Trimethylamine monooxygenase (445 aa).

FAD contacts are provided by Ser14, Glu39, Gln41, Leu47, Trp48, and His64. NADP(+) is bound by residues Trp72 and Asn74. Residues Asn74 and Val127 each contribute to the FAD site. Positions 204, 205, 207, and 228 each coordinate NADP(+). Gln317 and Thr320 together coordinate FAD. Arg411 is a binding site for NADP(+).

This sequence belongs to the FMO family. FAD serves as cofactor.

It catalyses the reaction trimethylamine + NADPH + O2 = trimethylamine N-oxide + NADP(+) + H2O. Functionally, catalyzes the oxidation of trimethylamine (TMA) to produce trimethylamine N-oxide (TMAO). In vitro, has a broad substrate specificity, oxidizing many nitrogen- and sulfur-containing compounds, including dimethylamine (DMA), dimethylsulfide (DMS) and dimethylsulfoxide (DMSO). This Roseovarius sp. (strain 217) protein is Trimethylamine monooxygenase.